The sequence spans 309 residues: Olfactory receptor 10V1 (309 aa).

Residues 1 to 25 (MEGINKTAKMQFFFRPFSPDPEVQM) lie on the Extracellular side of the membrane. An N-linked (GlcNAc...) asparagine glycan is attached at N5. Residues 26 to 46 (LIFVVFLMMYLTSLGGNATIA) traverse the membrane as a helical segment. The Cytoplasmic segment spans residues 47 to 54 (VIVQINHS). Residues 55–75 (LHTPMYFFLANLAVLEIFYTS) form a helical membrane-spanning segment. The Extracellular segment spans residues 76-100 (SITPLALANLLSMGKTPVSITGCGT). C98 and C190 are oxidised to a cystine. The helical transmembrane segment at 101 to 121 (QMFFFVFLGGADCVLLVVMAY) threads the bilayer. Topologically, residues 122–140 (DQFIAICHPLRYRLIMSWS) are cytoplasmic. The chain crosses the membrane as a helical span at residues 141–161 (LCVELLVGSLVLGFLLSLPLT). Residues 162-198 (ILIFHLPFCHNDEIYHFYCDMPAVMRLACADTRVHKT) are Extracellular-facing. The helical transmembrane segment at 199-218 (ALYIISFIVLSIPLSLISIS) threads the bilayer. At 219 to 238 (YVFIVVAILRIRSAEGRQQA) the chain is on the cytoplasmic side. The helical transmembrane segment at 239–259 (YSTCSSHILVVLLQYGCTSFI) threads the bilayer. Residues 260 to 272 (YLSPSSSYSPEMG) are Extracellular-facing. A helical membrane pass occupies residues 273-293 (RVVSVAYTFITPILNPLIYSL). Residues 294-309 (RNKELKDALRKALRKF) lie on the Cytoplasmic side of the membrane.

This sequence belongs to the G-protein coupled receptor 1 family.

The protein localises to the cell membrane. Functionally, odorant receptor. In Homo sapiens (Human), this protein is Olfactory receptor 10V1 (OR10V1).